We begin with the raw amino-acid sequence, 75 residues long: MAFLNKSLLLVLFLGLVSLSICEEERRENEDEEEQEDDEQSEMRRSLLSTLGNMAKAAGRAALNAITGLVNQGEQ.

The signal sequence occupies residues 1–22; the sequence is MAFLNKSLLLVLFLGLVSLSIC. The propeptide occupies 23-43; sequence EEERRENEDEEEQEDDEQSEM. Residues 24–44 are disordered; it reads EERRENEDEEEQEDDEQSEMR. A compositionally biased stretch (acidic residues) spans 30-40; sequence EDEEEQEDDEQ. At Gln72 the chain carries Glutamine amide. The propeptide occupies 74 to 75; the sequence is EQ.

As to expression, expressed by the skin glands.

It localises to the secreted. Functionally, has antibacterial activity against Gram-positive bacterium M.luteus NCT C2665 but not against Gram-negative bacterium E.coli K12D31. The sequence is that of Dermaseptin-related peptide from Agalychnis callidryas (Red-eyed tree frog).